Here is a 425-residue protein sequence, read N- to C-terminus: Septin-11 (425 aa).

Ala2 bears the N-acetylalanine mark. At Ser9 the chain carries Phosphoserine. Residues 38 to 304 (QGFCFNILCV…ELYRRCKLEE (267 aa)) enclose the Septin-type G domain. Positions 48 to 55 (GETGIGKS) are G1 motif. GTP contacts are provided by residues 48–55 (GETGIGKS), Gly103, 184–192 (KADTIAKNE), Gly238, and Arg253. The tract at residues 100–103 (DTVG) is G3 motif. The G4 motif stretch occupies residues 183-186 (AKAD). Residues 320–410 (QETYEAKRNE…AAQLLQSQAQ (91 aa)) are a coiled coil. Positions 399–425 (KAAAQLLQSQAQQSGAQQTKKDKDKKN) are disordered. The segment covering 401–416 (AAQLLQSQAQQSGAQQ) has biased composition (low complexity).

The protein belongs to the TRAFAC class TrmE-Era-EngA-EngB-Septin-like GTPase superfamily. Septin GTPase family. Septins polymerize into heterooligomeric protein complexes that form filaments, and can associate with cellular membranes, actin filaments and microtubules. Forms homooligomers. GTPase activity is required for filament formation. Interacts with SEPTIN7, SEPTIN9 and SEPTIN12.

Its subcellular location is the cytoplasm. The protein resides in the cytoskeleton. It is found in the synapse. The protein localises to the cell projection. It localises to the dendritic spine. Its subcellular location is the axon. Filament-forming cytoskeletal GTPase. May play a role in cytokinesis (Potential). May play a role in the cytoarchitecture of neurons, including dendritic arborization and dendritic spines, and in GABAergic synaptic connectivity. This chain is Septin-11, found in Bos taurus (Bovine).